Here is an 89-residue protein sequence, read N- to C-terminus: Elongation factor 1-beta (89 aa).

Belongs to the EF-1-beta/EF-1-delta family.

Functionally, promotes the exchange of GDP for GTP in EF-1-alpha/GDP, thus allowing the regeneration of EF-1-alpha/GTP that could then be used to form the ternary complex EF-1-alpha/GTP/AAtRNA. In Methanococcus maripaludis (strain C7 / ATCC BAA-1331), this protein is Elongation factor 1-beta.